Consider the following 1448-residue polypeptide: DNA primase TraC (1448 aa).

3 stretches are compositionally biased toward basic and acidic residues: residues alanine 844–asparagine 856, serine 863–alanine 872, and aspartate 882–glutamine 898. 2 disordered regions span residues alanine 844–proline 915 and glutamine 952–glutamine 982. The segment covering alanine 964–glutamine 982 has biased composition (low complexity). In terms of domain architecture, Toprim spans proline 1237 to proline 1325. A disordered region spans residues isoleucine 1414 to glycine 1448. Over residues glutamine 1418 to proline 1441 the composition is skewed to basic and acidic residues.

Its function is as follows. Required for autonomous replication in E.coli. Transferred into the recipient cell during bacterial conjugation. Catalyzes the synthesis of short oligoribonucleotide primers with CpA or pCpA at their 5'-termini on a single-stranded template DNA. The sequence is that of DNA primase TraC (traC) from Escherichia coli.